The primary structure comprises 683 residues: Inositol-trisphosphate 3-kinase C (683 aa).

The interval 1-124 (MRRCPCRGSL…PDRSSLRTHL (124 aa)) is disordered. Low complexity predominate over residues 13-22 (AEAGALPAAA). The segment covering 44-58 (PGAGAPAGRPEGGGP) has biased composition (gly residues). The segment covering 105–124 (ETERPKQKTEPDRSSLRTHL) has biased composition (basic and acidic residues). Phosphoserine is present on residues Ser-127 and Ser-162. Residues 147–308 (TDPHRSDLQF…EDGPLEEPEP (162 aa)) are disordered. Residues 196 to 206 (WTHQNSSSLQT) are compositionally biased toward polar residues. Basic and acidic residues predominate over residues 249-259 (SQKKQDTEAAR). Residues 267–289 (FQIQQDTDGSWTQPSTDGSQTAP) show a composition bias toward polar residues. Positions 297–308 (EPEDGPLEEPEP) are enriched in acidic residues. A Nuclear export signal motif is present at residues 324–332 (LCPVPRLII). The segment at 334 to 387 (PETPEPEAQPVGPPSRVEGGSGGFSSASSFDESEDDVVAGGGGASDPEDRSGSK) is disordered. Residue Thr-336 is modified to Phosphothreonine. A Phosphoserine modification is found at Ser-404. ATP-binding positions include Lys-431, 471–473 (EDL), and Asp-484. Substrate-binding positions include Lys-486, 507–513 (RKDMYEK), and 534–541 (KPRYMQWR). Residues 509–517 (DMYEKMVAV) are calmodulin-binding. ATP-binding residues include Lys-558 and Asp-638. Residue Lys-641 coordinates substrate.

It belongs to the inositol phosphokinase (IPK) family. In terms of tissue distribution, highly expressed in pancreas, skeletal muscle, liver, placenta and weakly in kidney and brain.

Its subcellular location is the nucleus. It is found in the cytoplasm. It carries out the reaction 1D-myo-inositol 1,4,5-trisphosphate + ATP = 1D-myo-inositol 1,3,4,5-tetrakisphosphate + ADP + H(+). Activated by calcium/calmodulin. Inhibited by high concentrations of the substrate Ins(1,2,4)P3, and allosterically activated by the product Ins(1,3,4,5)P4. Catalyzes the phosphorylation of 1D-myo-inositol 1,4,5-trisphosphate (InsP3) into 1D-myo-inositol 1,3,4,5-tetrakisphosphate and participates to the regulation of calcium homeostasis. Can phosphorylate inositol 2,4,5-triphosphate to inositol 2,4,5,6-tetraphosphate. This chain is Inositol-trisphosphate 3-kinase C, found in Homo sapiens (Human).